Reading from the N-terminus, the 121-residue chain is Aspartate 1-decarboxylase (121 aa).

Residue Ser-25 is the Schiff-base intermediate with substrate; via pyruvic acid of the active site. Pyruvic acid (Ser) is present on Ser-25. A substrate-binding site is contributed by Thr-57. Tyr-58 acts as the Proton donor in catalysis. 73-75 (GAA) contributes to the substrate binding site.

It belongs to the PanD family. In terms of assembly, heterooctamer of four alpha and four beta subunits. The cofactor is pyruvate. Is synthesized initially as an inactive proenzyme, which is activated by self-cleavage at a specific serine bond to produce a beta-subunit with a hydroxyl group at its C-terminus and an alpha-subunit with a pyruvoyl group at its N-terminus.

The protein localises to the cytoplasm. The catalysed reaction is L-aspartate + H(+) = beta-alanine + CO2. It participates in cofactor biosynthesis; (R)-pantothenate biosynthesis; beta-alanine from L-aspartate: step 1/1. In terms of biological role, catalyzes the pyruvoyl-dependent decarboxylation of aspartate to produce beta-alanine. The chain is Aspartate 1-decarboxylase from Wolinella succinogenes (strain ATCC 29543 / DSM 1740 / CCUG 13145 / JCM 31913 / LMG 7466 / NCTC 11488 / FDC 602W) (Vibrio succinogenes).